A 352-amino-acid polypeptide reads, in one-letter code: Tropomodulin-3 (352 aa).

Residue Ser25 is modified to Phosphoserine.

The protein belongs to the tropomodulin family. As to quaternary structure, binds to the N-terminus of tropomyosin and to actin. Interacts with FLII. In terms of tissue distribution, ubiquitous.

The protein localises to the cytoplasm. Its subcellular location is the cytoskeleton. In terms of biological role, blocks the elongation and depolymerization of the actin filaments at the pointed end. The Tmod/TM complex contributes to the formation of the short actin protofilament, which in turn defines the geometry of the membrane skeleton. In Homo sapiens (Human), this protein is Tropomodulin-3 (TMOD3).